A 352-amino-acid chain; its full sequence is Ion-translocating oxidoreductase complex subunit D (352 aa).

Helical transmembrane passes span 20-40, 42-62, 78-109, 123-143, and 148-168; these read IMLLVLLAAVPGIAAQLWFFG, GTLVQILLASVSALLAEALVL, ALLTGLLLAVSIPPLAPWWMVVLGTVFAVIIA, PAMIGYVVLLISFPVQMTSWL, and IAVNIPGFIDAIQVIFSGHTA. Thr187 is subject to FMN phosphoryl threonine. 4 helical membrane passes run 214–234, 242–262, 267–287, and 301–318; these read ILAGAGWQWVNLAWLAGGVWL, WHIPLSFLVTLALCATLGWLF, LAAPQIHLLSGATMLGAFFIL, and LMFGALAGLLVWLIRSFG.

The protein belongs to the NqrB/RnfD family. As to quaternary structure, the complex is composed of six subunits: RsxA, RsxB, RsxC, RsxD, RsxE and RsxG. The cofactor is FMN.

It is found in the cell inner membrane. Part of a membrane-bound complex that couples electron transfer with translocation of ions across the membrane. Required to maintain the reduced state of SoxR. The polypeptide is Ion-translocating oxidoreductase complex subunit D (Shigella flexneri serotype 5b (strain 8401)).